Consider the following 720-residue polypeptide: Mitogen-activated protein kinase 6 (720 aa).

Met-1 is covalently cross-linked (Peptide (Met-Gly) (interchain with G-Cter in ubiquitin)). The region spanning 20–316 is the Protein kinase domain; sequence YMDLKPLGCG…AEEALSHPYM (297 aa). Residues 26 to 34 and Lys-49 contribute to the ATP site; that span reads LGCGGNGLV. Catalysis depends on Asp-152, which acts as the Proton acceptor. Ser-189 carries the phosphoserine; by PAK1, PAK2 and PAK3 modification. Residues 189-191 carry the SEG motif motif; the sequence is SEG. Positions 332 to 337 match the FRIEDE motif motif; that stretch reads FHIEDE. Ser-386, Ser-452, Ser-554, and Ser-556 each carry phosphoserine. A disordered region spans residues 638–657; the sequence is SEMLETEPVEEGKRGERGRE. The span at 647–657 shows a compositional bias: basic and acidic residues; the sequence is EEGKRGERGRE. Ser-683 carries the phosphoserine modification. Over residues 698–714 the composition is skewed to polar residues; that stretch reads PSAMKSSPQIPHKTYSN. Positions 698-720 are disordered; that stretch reads PSAMKSSPQIPHKTYSNILKHLN.

Belongs to the protein kinase superfamily. CMGC Ser/Thr protein kinase family. MAP kinase subfamily. In terms of assembly, heterodimer with ERK4/MAPK4. Interacts with (via FRIEDE motif) MAPKAPK5. Interacts with UBE3A; this interaction may be indirect and mediated by HERC2, possibly via HERC2 interaction with NEURL4. Mg(2+) serves as cofactor. In terms of processing, phosphorylated at Ser-189 by PAK1, PAK2 and PAK3 resulting in catalytic activation. Phosphorylated by MAPKAPK5 at other sites. Post-translationally, ubiquitination at Met-1 leads to degradation by the proteasome pathway. Highest levels within the nervous system, expressed in different tissues, mostly in skeletal muscle.

It is found in the cytoplasm. It localises to the nucleus. The enzyme catalyses L-seryl-[protein] + ATP = O-phospho-L-seryl-[protein] + ADP + H(+). It catalyses the reaction L-threonyl-[protein] + ATP = O-phospho-L-threonyl-[protein] + ADP + H(+). Activated by phosphorylation at Ser-189. Its function is as follows. Atypical MAPK protein. Phosphorylates microtubule-associated protein 2 (MAP2) and MAPKAPK5. The precise role of the complex formed with MAPKAPK5 is still unclear, but the complex follows a complex set of phosphorylation events: upon interaction with atypical MAPKAPK5, ERK3/MAPK6 is phosphorylated at Ser-189 and then mediates phosphorylation and activation of MAPKAPK5, which in turn phosphorylates ERK3/MAPK6. May promote entry in the cell cycle. The sequence is that of Mitogen-activated protein kinase 6 (Mapk6) from Rattus norvegicus (Rat).